The following is a 132-amino-acid chain: uncharacterized protein (132 aa).

Residues 105 to 125 traverse the membrane as a helical segment; it reads VHGYVVFWLSILCILIIIFVY.

The protein localises to the membrane. This is an uncharacterized protein from Methanocaldococcus jannaschii (strain ATCC 43067 / DSM 2661 / JAL-1 / JCM 10045 / NBRC 100440) (Methanococcus jannaschii).